The chain runs to 78 residues: Small ribosomal subunit protein bS16c (78 aa).

It belongs to the bacterial ribosomal protein bS16 family.

The protein localises to the plastid. It is found in the chloroplast. The polypeptide is Small ribosomal subunit protein bS16c (Chara vulgaris (Common stonewort)).